Here is a 211-residue protein sequence, read N- to C-terminus: PITH domain-containing protein CG6153 (211 aa).

Residues 20 to 192 (DHALEMGIEY…GVTICNYESR (173 aa)) form the PITH domain.

The protein belongs to the PITHD1 family.

The polypeptide is PITH domain-containing protein CG6153 (Drosophila melanogaster (Fruit fly)).